The chain runs to 104 residues: Pole-localizer protein TmaR (104 aa).

Coiled-coil stretches lie at residues 7-34 and 76-96; these read IVNQ…NRKR and SAEI…LTEE.

Belongs to the pole-localizer TmaR family.

It is found in the cytoplasm. Pole-localizer protein involved in the regulation of several cellular processes. The polypeptide is Pole-localizer protein TmaR (Vibrio campbellii (strain ATCC BAA-1116)).